Consider the following 166-residue polypeptide: Large ribosomal subunit protein uL11 (166 aa).

An N5-methylarginine modification is found at arginine 67.

This sequence belongs to the universal ribosomal protein uL11 family.

The sequence is that of Large ribosomal subunit protein uL11 (RPL12) from Encephalitozoon cuniculi (strain GB-M1) (Microsporidian parasite).